The chain runs to 321 residues: Olfactory receptor 3A2 (321 aa).

At 1–35 (MSLQKLMEPEAGTNRTAVAEFILLGLVQTEEMQPV) the chain is on the extracellular side. A glycan (N-linked (GlcNAc...) asparagine) is linked at asparagine 14. Residues 36 to 58 (VFVLLLFAYLVTTGGNLSILAAV) traverse the membrane as a helical segment. The Cytoplasmic segment spans residues 59 to 66 (LVEPKLHA). Residues 67-88 (PMYFFLGNLSVLDVGCITVTVP) traverse the membrane as a helical segment. At 89 to 109 (AMLGRLLSHKSTISYDACLSQ) the chain is on the extracellular side. Cysteine 106 and cysteine 198 are oxidised to a cystine. The chain crosses the membrane as a helical span at residues 110–129 (LFFFHLLAGMDCFLLTAMAY). Over 130 to 149 (DRLLAICQPLTYSTRMSQTV) the chain is Cytoplasmic. Residues 150–167 (QRMLVAASLACAFTNALT) traverse the membrane as a helical segment. The Extracellular segment spans residues 168-205 (HTVAMSTLNFCGPNEVNHFYCDLPQLFQLSCSSTQLNE). A helical membrane pass occupies residues 206–229 (LLLFAVGFIMAGTPLVLIITAYSH). Residues 230–246 (VAAAVLRIRSVEGRKKA) lie on the Cytoplasmic side of the membrane. A helical transmembrane segment spans residues 247 to 270 (FSTCGSHLTVVCLFFGRGIFNYMR). Over 271–281 (LGSEEASDKDK) the chain is Extracellular. The chain crosses the membrane as a helical span at residues 282–301 (GVGVFNTVINPMLNPLIYSL). Residues 302–321 (RNPDVQGALWQIFLGRRSLT) lie on the Cytoplasmic side of the membrane.

This sequence belongs to the G-protein coupled receptor 1 family.

It is found in the cell membrane. Its function is as follows. Odorant receptor. This Homo sapiens (Human) protein is Olfactory receptor 3A2 (OR3A2).